Reading from the N-terminus, the 460-residue chain is V-type ATP synthase beta chain (460 aa).

This sequence belongs to the ATPase alpha/beta chains family.

In terms of biological role, produces ATP from ADP in the presence of a proton gradient across the membrane. The V-type beta chain is a regulatory subunit. The sequence is that of V-type ATP synthase beta chain from Clostridium novyi (strain NT).